The sequence spans 261 residues: MTDSAAPRLHVQALSADWAEAARHWAERLGLPLAADDQADFAVQVGEQGLQVLQLGPDSPGPVRVDFVEGASAHRRKFGGGSGQMIAKAVGIQPGVRPRVLDATAGLGRDGFVLASLGCEVTLVERQPLIAALLEDGLERARRDPDVAPIAARMRLLGGNAADLMRAWEGEAPQVVYLDPMFPHRDKSALVKKEMRLFRPLVGDDLDAPALLEAALALASHRVVVKRPRKAPVIDGAKPGYSLDGKSSRYDIYPKKALNKA.

Residues 109 to 110, 125 to 126, and Asp179 each bind S-adenosyl-L-methionine; these read RD and ER.

It belongs to the methyltransferase superfamily. RsmJ family.

It localises to the cytoplasm. The enzyme catalyses guanosine(1516) in 16S rRNA + S-adenosyl-L-methionine = N(2)-methylguanosine(1516) in 16S rRNA + S-adenosyl-L-homocysteine + H(+). Specifically methylates the guanosine in position 1516 of 16S rRNA. The protein is Ribosomal RNA small subunit methyltransferase J of Pseudomonas paraeruginosa (strain DSM 24068 / PA7) (Pseudomonas aeruginosa (strain PA7)).